Here is a 258-residue protein sequence, read N- to C-terminus: MIPPADSLLKYDTPVLVSRNTEKRSPKARLLKVSPQQPGPSGSAPQPPKTKLPSTPCVPDPTKQAEEILNAILPPREWVEDTQLWIQQVSSTPSTRMDVVHLQEQLDLKLQQRQARETGICPVRRELYSQCFDELIREVTINCAERGLLLLRVRDEIRMTIAAYQTLYESSVAFGMRKALQAEQGKSDMERKIAELETEKRDLERQVNEQKAKCEATEKRESERRQVEEKKHNEEIQFLKRTNQQLKAQLEGIIAPKK.

Disordered regions lie at residues 1–60 and 207–231; these read MIPP…CVPD and VNEQKAKCEATEKRESERRQVEEKK. A compositionally biased stretch (low complexity) spans 34 to 44; the sequence is SPQQPGPSGSA. A coiled-coil region spans residues 176-255; that stretch reads MRKALQAEQG…LKAQLEGIIA (80 aa).

It belongs to the inner dynein arm light chain family. In terms of assembly, interacts with CFAP45. Interacts with DYNC1H1. In terms of tissue distribution, expressed in many tissues. A smaller 0.9 kb and a larger 2.5 kb transcripts were detected at the highest level in the testis, at medium levels in the prostate, heart, liver, lung and pancreas, at low levels in the ovary, skeletal muscle and small intestine. Not detected in spleen, colon epithelium, thymus or peripheral blood leukocytes. The 0.9 kb transcript is expressed at a 20-fold higher level than the 2.5 kb transcript in the testis. Expressed in spermatozoa and airway epithelial cells (at protein level).

The protein resides in the cell projection. Its subcellular location is the cilium. It is found in the flagellum. It localises to the dynein axonemal particle. The protein localises to the cytoplasm. In terms of biological role, involved in sperm flagellum assembly. This chain is Axonemal dynein light intermediate polypeptide 1, found in Homo sapiens (Human).